Here is a 179-residue protein sequence, read N- to C-terminus: NAD(P)H-quinone oxidoreductase subunit J (179 aa).

Belongs to the complex I 30 kDa subunit family. NDH-1 can be composed of about 15 different subunits; different subcomplexes with different compositions have been identified which probably have different functions. Post-translationally, in at one experiment the initiator methionine has been seen to be kept and removed.

It localises to the cellular thylakoid membrane. It catalyses the reaction a plastoquinone + NADH + (n+1) H(+)(in) = a plastoquinol + NAD(+) + n H(+)(out). The catalysed reaction is a plastoquinone + NADPH + (n+1) H(+)(in) = a plastoquinol + NADP(+) + n H(+)(out). Its function is as follows. NDH-1 shuttles electrons from an unknown electron donor, via FMN and iron-sulfur (Fe-S) centers, to quinones in the respiratory and/or the photosynthetic chain. The immediate electron acceptor for the enzyme in this species is believed to be plastoquinone. Couples the redox reaction to proton translocation, and thus conserves the redox energy in a proton gradient. Cyanobacterial NDH-1 also plays a role in inorganic carbon-concentration. The protein is NAD(P)H-quinone oxidoreductase subunit J of Synechocystis sp. (strain ATCC 27184 / PCC 6803 / Kazusa).